The primary structure comprises 143 residues: Transcriptional regulatory protein RosR (143 aa).

The segment at 79–97 adopts a C2H3-type zinc-finger fold; it reads CLECGGNFKSLKRHLMTHH.

Belongs to the ros/MucR family.

The sequence is that of Transcriptional regulatory protein RosR (rosR) from Rhizobium etli (strain ATCC 51251 / DSM 11541 / JCM 21823 / NBRC 15573 / CFN 42).